The chain runs to 196 residues: dITP/XTP pyrophosphatase (196 aa).

Ser10–Lys15 contributes to the substrate binding site. Positions 40 and 69 each coordinate Mg(2+). The active-site Proton acceptor is Asp69. Substrate is bound by residues Ser70, Phe147–Asp150, Lys170, and His175–Arg176.

It belongs to the HAM1 NTPase family. As to quaternary structure, homodimer. It depends on Mg(2+) as a cofactor.

It carries out the reaction XTP + H2O = XMP + diphosphate + H(+). The enzyme catalyses dITP + H2O = dIMP + diphosphate + H(+). It catalyses the reaction ITP + H2O = IMP + diphosphate + H(+). Its function is as follows. Pyrophosphatase that catalyzes the hydrolysis of nucleoside triphosphates to their monophosphate derivatives, with a high preference for the non-canonical purine nucleotides XTP (xanthosine triphosphate), dITP (deoxyinosine triphosphate) and ITP. Seems to function as a house-cleaning enzyme that removes non-canonical purine nucleotides from the nucleotide pool, thus preventing their incorporation into DNA/RNA and avoiding chromosomal lesions. This chain is dITP/XTP pyrophosphatase, found in Prochlorococcus marinus (strain NATL1A).